Consider the following 95-residue polypeptide: Co-chaperonin GroES (95 aa).

The protein belongs to the GroES chaperonin family. In terms of assembly, heptamer of 7 subunits arranged in a ring. Interacts with the chaperonin GroEL.

It localises to the cytoplasm. Functionally, together with the chaperonin GroEL, plays an essential role in assisting protein folding. The GroEL-GroES system forms a nano-cage that allows encapsulation of the non-native substrate proteins and provides a physical environment optimized to promote and accelerate protein folding. GroES binds to the apical surface of the GroEL ring, thereby capping the opening of the GroEL channel. This chain is Co-chaperonin GroES, found in Pelobacter propionicus (strain DSM 2379 / NBRC 103807 / OttBd1).